A 205-amino-acid polypeptide reads, in one-letter code: Probable DNA-binding protein (205 aa).

The disordered stretch occupies residues 140 to 168 (GEGDGAPRPACPDFSTRGAETGNQGVQPG).

In Homo sapiens (Human), this protein is Probable DNA-binding protein.